The sequence spans 214 residues: Pyrophosphatase PpaX (214 aa).

The Nucleophile role is filled by aspartate 9.

It belongs to the HAD-like hydrolase superfamily. PpaX family. Mg(2+) serves as cofactor.

It carries out the reaction diphosphate + H2O = 2 phosphate + H(+). In terms of biological role, hydrolyzes pyrophosphate formed during P-Ser-HPr dephosphorylation by HPrK/P. Might play a role in controlling the intracellular pyrophosphate pool. The protein is Pyrophosphatase PpaX of Oceanobacillus iheyensis (strain DSM 14371 / CIP 107618 / JCM 11309 / KCTC 3954 / HTE831).